Reading from the N-terminus, the 151-residue chain is Mini-ribonuclease 3 (151 aa).

Asp-30 is an active-site residue.

It belongs to the MrnC RNase family. In terms of assembly, homodimer. Mg(2+) serves as cofactor.

The protein localises to the cytoplasm. In terms of biological role, involved in correct processing of both the 5' and 3' ends of 23S rRNA precursor. Processes 30S rRNA precursor transcript even in absence of ribonuclease 3 (Rnc); Rnc processes 30S rRNA into smaller rRNA precursors. The protein is Mini-ribonuclease 3 of Thermosynechococcus vestitus (strain NIES-2133 / IAM M-273 / BP-1).